The chain runs to 161 residues: Ribosome maturation factor RimP (161 aa).

It belongs to the RimP family.

Its subcellular location is the cytoplasm. Functionally, required for maturation of 30S ribosomal subunits. This chain is Ribosome maturation factor RimP, found in Rickettsia rickettsii (strain Iowa).